The following is a 67-amino-acid chain: ATP synthase protein 8 (67 aa).

A helical transmembrane segment spans residues Thr-8–Phe-24. Lys-54 bears the N6-acetyllysine; alternate mark. At Lys-54 the chain carries N6-succinyllysine; alternate. At Lys-57 the chain carries N6-acetyllysine.

Belongs to the ATPase protein 8 family. In terms of assembly, F-type ATPases have 2 components, CF(1) - the catalytic core - and CF(0) - the membrane proton channel. Component of an ATP synthase complex composed of ATP5PB, ATP5MC1, ATP5F1E, ATP5PD, ATP5ME, ATP5PF, ATP5MF, MT-ATP6, MT-ATP8, ATP5F1A, ATP5F1B, ATP5F1D, ATP5F1C, ATP5PO, ATP5MG, ATP5MK and ATP5MJ. Interacts with PRICKLE3.

The protein localises to the mitochondrion membrane. Mitochondrial membrane ATP synthase (F(1)F(0) ATP synthase or Complex V) produces ATP from ADP in the presence of a proton gradient across the membrane which is generated by electron transport complexes of the respiratory chain. F-type ATPases consist of two structural domains, F(1) - containing the extramembraneous catalytic core and F(0) - containing the membrane proton channel, linked together by a central stalk and a peripheral stalk. During catalysis, ATP synthesis in the catalytic domain of F(1) is coupled via a rotary mechanism of the central stalk subunits to proton translocation. Part of the complex F(0) domain. Minor subunit located with subunit a in the membrane. This is ATP synthase protein 8 (MT-ATP8) from Vicugna pacos (Alpaca).